The chain runs to 236 residues: Reticulon-3 (236 aa).

Residues 1–24 are compositionally biased toward low complexity; the sequence is MAEPSAATQSPSISSSSSGAEPSA. The tract at residues 1–31 is disordered; the sequence is MAEPSAATQSPSISSSSSGAEPSAPGGGGSP. The residue at position 2 (A2) is an N-acetylalanine. Residues 2–67 are Cytoplasmic-facing; that stretch reads AEPSAATQSP…KKTGFVFGTT (66 aa). Position 30 is a phosphoserine (S30). The Reticulon domain occupies 48-236; the sequence is VHDLIFWRDV…LPGIAKKKAE (189 aa). An intramembrane region (helical) is located at residues 68–91; it reads LIMLLSLAAFSVISVVSYLILALL. Residues 92–151 are Cytoplasmic-facing; that stretch reads SVTISFRIYKSVIQAVQKSEEGHPFKAYLDVDITLSSEAFHNYMNAAMVHINRALKLIIR. The segment at residues 152 to 172 is an intramembrane region (helical); the sequence is LFLVEDLVDSLKLAVFMWLMT. The Cytoplasmic portion of the chain corresponds to 173–176; sequence YVGA. An intramembrane region (helical) is located at residues 177–197; the sequence is VFNGITLLILAELLIFSVPIV. The interval 191-236 is interaction with FADD; it reads IFSVPIVYEKYKTQIDHYVGIARDQTKSIVEKIQAKLPGIAKKKAE. The Cytoplasmic portion of the chain corresponds to 198–236; sequence YEKYKTQIDHYVGIARDQTKSIVEKIQAKLPGIAKKKAE. Residues 204 to 206 are interaction with BACE1; sequence QID.

As to quaternary structure, homodimer. Interacts with RTN4. Interacts with BACE1, BACE2, BCL2 and FADD. Interacts with ATL1 and ATL2. Interacts with TMEM33. Interacts with ZFYVE27 and with KIF5A in a ZFYVE27-dependent manner. Interacts with RIGI. Interacts with TRIM25.

Its subcellular location is the endoplasmic reticulum membrane. The protein resides in the golgi apparatus membrane. Its function is as follows. May be involved in membrane trafficking in the early secretory pathway. Inhibits BACE1 activity and amyloid precursor protein processing. May induce caspase-8 cascade and apoptosis. May favor BCL2 translocation to the mitochondria upon endoplasmic reticulum stress. Induces the formation of endoplasmic reticulum tubules. Acts also as an inflammation-resolving regulator by interacting with both TRIM25 and RIGI, subsequently impairing RIGI 'Lys-63'-linked polyubiquitination leading to IRF3 and NF-kappa-B inhibition. The protein is Reticulon-3 (RTN3) of Pongo abelii (Sumatran orangutan).